The chain runs to 472 residues: Methylenetetrahydrofolate--tRNA-(uracil-5-)-methyltransferase TrmFO (472 aa).

Residue glycine 15–glycine 20 coordinates FAD.

The protein belongs to the MnmG family. TrmFO subfamily. FAD serves as cofactor.

Its subcellular location is the cytoplasm. It carries out the reaction uridine(54) in tRNA + (6R)-5,10-methylene-5,6,7,8-tetrahydrofolate + NADH + H(+) = 5-methyluridine(54) in tRNA + (6S)-5,6,7,8-tetrahydrofolate + NAD(+). The enzyme catalyses uridine(54) in tRNA + (6R)-5,10-methylene-5,6,7,8-tetrahydrofolate + NADPH + H(+) = 5-methyluridine(54) in tRNA + (6S)-5,6,7,8-tetrahydrofolate + NADP(+). Functionally, catalyzes the folate-dependent formation of 5-methyl-uridine at position 54 (M-5-U54) in all tRNAs. The sequence is that of Methylenetetrahydrofolate--tRNA-(uracil-5-)-methyltransferase TrmFO from Rhizobium meliloti (strain 1021) (Ensifer meliloti).